Reading from the N-terminus, the 378-residue chain is Cytochrome b (378 aa).

Transmembrane regions (helical) follow at residues Phe-34 to Met-54, Trp-78 to Val-99, Trp-114 to Leu-134, and Phe-179 to Leu-199. Residues His-84 and His-98 each coordinate heme b. 2 residues coordinate heme b: His-183 and His-197. His-202 contacts a ubiquinone. 4 helical membrane-spanning segments follow: residues Tyr-227–Phe-247, Leu-289–His-309, Leu-321–Ala-341, and Tyr-348–Leu-368.

This sequence belongs to the cytochrome b family. In terms of assembly, the main subunits of complex b-c1 are: cytochrome b, cytochrome c1 and the Rieske protein. Heme b is required as a cofactor.

It is found in the mitochondrion inner membrane. Functionally, component of the ubiquinol-cytochrome c reductase complex (complex III or cytochrome b-c1 complex) that is part of the mitochondrial respiratory chain. The b-c1 complex mediates electron transfer from ubiquinol to cytochrome c. Contributes to the generation of a proton gradient across the mitochondrial membrane that is then used for ATP synthesis. The chain is Cytochrome b from Aedes aegypti (Yellowfever mosquito).